The following is a 176-amino-acid chain: Large ribosomal subunit protein uL5 (176 aa).

Belongs to the universal ribosomal protein uL5 family. Part of the 50S ribosomal subunit; contacts the 5S rRNA and probably tRNA. Forms a bridge to the 30S subunit in the 70S ribosome.

Its function is as follows. This is one of the proteins that bind and probably mediate the attachment of the 5S RNA into the large ribosomal subunit, where it forms part of the central protuberance. In the 70S ribosome it contacts protein S13 of the 30S subunit (bridge B1b), connecting the 2 subunits; this bridge is implicated in subunit movement. May contact the P site tRNA; the 5S rRNA and some of its associated proteins might help stabilize positioning of ribosome-bound tRNAs. In Picrophilus torridus (strain ATCC 700027 / DSM 9790 / JCM 10055 / NBRC 100828 / KAW 2/3), this protein is Large ribosomal subunit protein uL5.